A 295-amino-acid polypeptide reads, in one-letter code: Elongation factor Ts (295 aa).

An involved in Mg(2+) ion dislocation from EF-Tu region spans residues 80–83 (TDFV).

The protein belongs to the EF-Ts family.

It is found in the cytoplasm. In terms of biological role, associates with the EF-Tu.GDP complex and induces the exchange of GDP to GTP. It remains bound to the aminoacyl-tRNA.EF-Tu.GTP complex up to the GTP hydrolysis stage on the ribosome. This Lysinibacillus sphaericus (strain C3-41) protein is Elongation factor Ts.